A 272-amino-acid polypeptide reads, in one-letter code: Ribonuclease HII (272 aa).

Residues 87–272 form the RNase H type-2 domain; that stretch reads KYVAGVDEVG…HRMSFLKNIL (186 aa). Residues D93, E94, and D188 each contribute to the a divalent metal cation site.

The protein belongs to the RNase HII family. Requires Mn(2+) as cofactor. Mg(2+) serves as cofactor.

It is found in the cytoplasm. It catalyses the reaction Endonucleolytic cleavage to 5'-phosphomonoester.. In terms of biological role, endonuclease that specifically degrades the RNA of RNA-DNA hybrids. The sequence is that of Ribonuclease HII from Clostridium perfringens (strain SM101 / Type A).